The following is a 181-amino-acid chain: High mobility group protein B4 (181 aa).

The HMG box 1 DNA-binding region spans 9–79 (PKVNVSSYIH…RYQQEMMNYI (71 aa)). Residues 80 to 89 (GKRRKRRKRD) show a composition bias toward basic residues. The tract at residues 80–100 (GKRRKRRKRDPKAPRKPPSSF) is disordered. Positions 93–161 (PRKPPSSFLL…KYFEEQEAYR (69 aa)) form a DNA-binding region, HMG box 2.

This sequence belongs to the HMGB family. As to expression, expressed in adult germ cells (at protein level).

Its subcellular location is the nucleus. The protein resides in the chromosome. This is High mobility group protein B4 (Hmgb4) from Mus musculus (Mouse).